The following is a 344-amino-acid chain: Large ribosomal subunit protein uL3 (344 aa).

It belongs to the universal ribosomal protein uL3 family. In terms of assembly, part of the 50S ribosomal subunit. Forms a cluster with proteins L14 and L24e.

In terms of biological role, one of the primary rRNA binding proteins, it binds directly near the 3'-end of the 23S rRNA, where it nucleates assembly of the 50S subunit. In Aeropyrum pernix (strain ATCC 700893 / DSM 11879 / JCM 9820 / NBRC 100138 / K1), this protein is Large ribosomal subunit protein uL3.